The following is a 146-amino-acid chain: Hemoglobin subunit beta (146 aa).

Position 1 is an N-acetylvaline (valine 1). One can recognise a Globin domain in the interval 2 to 146; sequence HLTGEEKAAV…VATALAHKYH (145 aa). Threonine 12 carries the phosphothreonine modification. Phosphoserine is present on serine 44. Lysine 59 is subject to N6-acetyllysine. Position 63 (histidine 63) interacts with heme b. At lysine 82 the chain carries N6-acetyllysine. Residue histidine 92 coordinates heme b. Cysteine 93 is subject to S-nitrosocysteine. At lysine 144 the chain carries N6-acetyllysine.

The protein belongs to the globin family. As to quaternary structure, heterotetramer of two alpha chains and two beta chains. In terms of tissue distribution, red blood cells.

Involved in oxygen transport from the lung to the various peripheral tissues. The sequence is that of Hemoglobin subunit beta (HBB) from Macroderma gigas (Australian ghost bat).